We begin with the raw amino-acid sequence, 563 residues long: Arginine--tRNA ligase (563 aa).

The short motif at 120–130 is the 'HIGH' region element; that stretch reads PNIAKPFHVGH.

Belongs to the class-I aminoacyl-tRNA synthetase family. As to quaternary structure, monomer.

It localises to the cytoplasm. It catalyses the reaction tRNA(Arg) + L-arginine + ATP = L-arginyl-tRNA(Arg) + AMP + diphosphate. This chain is Arginine--tRNA ligase, found in Clostridium acetobutylicum (strain ATCC 824 / DSM 792 / JCM 1419 / IAM 19013 / LMG 5710 / NBRC 13948 / NRRL B-527 / VKM B-1787 / 2291 / W).